A 416-amino-acid polypeptide reads, in one-letter code: Phosphoglycerate kinase (416 aa).

Residues Val-23, Asp-24, Phe-25, Asn-26, Gln-38, Arg-39, Ser-62, His-63, Gly-65, Arg-66, Leu-121, Arg-122, His-168, and Arg-169 each contribute to the (2R)-3-phosphoglycerate site. Position 212 (Gly-212) interacts with ADP. Residue Gly-212 participates in CDP binding. Positions 213 and 214 each coordinate AMP. Ala-213 lines the ATP pocket. Residue Ala-213 participates in Mg(2+) binding. A CDP-binding site is contributed by Asp-217. Position 217 (Asp-217) interacts with Mg(2+). Lys-218 contributes to the AMP binding site. Lys-218 contacts ATP. Position 236 (Gly-236) interacts with ADP. Gly-236 contributes to the CDP binding site. The AMP site is built by Gly-237 and Gly-311. Residues Gly-237 and Gly-311 each contribute to the ATP site. 2 residues coordinate CDP: Gly-336 and Phe-341. Residue Phe-341 coordinates ADP. Glu-342 contributes to the AMP binding site. ATP-binding residues include Glu-342, Asp-373, and Thr-374. Asp-373 is a binding site for Mg(2+).

The protein belongs to the phosphoglycerate kinase family. Monomer. It depends on Mg(2+) as a cofactor.

It localises to the cytoplasm. The protein localises to the mitochondrion. The catalysed reaction is (2R)-3-phosphoglycerate + ATP = (2R)-3-phospho-glyceroyl phosphate + ADP. Its pathway is carbohydrate degradation; glycolysis; pyruvate from D-glyceraldehyde 3-phosphate: step 2/5. Catalyzes one of the two ATP producing reactions in the glycolytic pathway via the reversible conversion of 1,3-diphosphoglycerate to 3-phosphoglycerate. Both L- and D- forms of purine and pyrimidine nucleotides can be used as substrates, but the activity is much lower on pyrimidines. Negatively regulates the biosynthesis of acetyl-CoA from pyruvate in the mitochondrion. This chain is Phosphoglycerate kinase (PGK1), found in Debaryomyces hansenii (strain ATCC 36239 / CBS 767 / BCRC 21394 / JCM 1990 / NBRC 0083 / IGC 2968) (Yeast).